Consider the following 226-residue polypeptide: Enolase-phosphatase E1 (226 aa).

The protein belongs to the HAD-like hydrolase superfamily. MasA/MtnC family. As to quaternary structure, monomer. The cofactor is Mg(2+).

It carries out the reaction 5-methylsulfanyl-2,3-dioxopentyl phosphate + H2O = 1,2-dihydroxy-5-(methylsulfanyl)pent-1-en-3-one + phosphate. It participates in amino-acid biosynthesis; L-methionine biosynthesis via salvage pathway; L-methionine from S-methyl-5-thio-alpha-D-ribose 1-phosphate: step 3/6. Its pathway is amino-acid biosynthesis; L-methionine biosynthesis via salvage pathway; L-methionine from S-methyl-5-thio-alpha-D-ribose 1-phosphate: step 4/6. In terms of biological role, bifunctional enzyme that catalyzes the enolization of 2,3-diketo-5-methylthiopentyl-1-phosphate (DK-MTP-1-P) into the intermediate 2-hydroxy-3-keto-5-methylthiopentenyl-1-phosphate (HK-MTPenyl-1-P), which is then dephosphorylated to form the acireductone 1,2-dihydroxy-3-keto-5-methylthiopentene (DHK-MTPene). The sequence is that of Enolase-phosphatase E1 from Shewanella frigidimarina (strain NCIMB 400).